A 168-amino-acid polypeptide reads, in one-letter code: 2-oxo-4-hydroxy-4-carboxy-5-ureidoimidazoline decarboxylase (168 aa).

The Proton donor; for OHCU decarboxylase activity role is filled by His-70. Residues 70–79 (HPDLGERTEM) are compositionally biased toward basic and acidic residues. Residues 70 to 93 (HPDLGERTEMTDASEAEQASAELD) are disordered. Substrate is bound by residues Pro-71, 83-87 (SEAEQ), and 118-122 (FVMAV).

It belongs to the OHCU decarboxylase family.

The catalysed reaction is 5-hydroxy-2-oxo-4-ureido-2,5-dihydro-1H-imidazole-5-carboxylate + H(+) = (S)-allantoin + CO2. The protein operates within purine metabolism; urate degradation; (S)-allantoin from urate: step 3/3. In terms of biological role, catalyzes the stereoselective decarboxylation of 2-oxo-4-hydroxy-4-carboxy-5-ureidoimidazoline (OHCU) to (S)-allantoin. The chain is 2-oxo-4-hydroxy-4-carboxy-5-ureidoimidazoline decarboxylase from Haloferax volcanii (strain ATCC 29605 / DSM 3757 / JCM 8879 / NBRC 14742 / NCIMB 2012 / VKM B-1768 / DS2) (Halobacterium volcanii).